The following is a 303-amino-acid chain: Glycine--tRNA ligase alpha subunit (303 aa).

The protein belongs to the class-II aminoacyl-tRNA synthetase family. In terms of assembly, tetramer of two alpha and two beta subunits.

Its subcellular location is the cytoplasm. It carries out the reaction tRNA(Gly) + glycine + ATP = glycyl-tRNA(Gly) + AMP + diphosphate. The protein is Glycine--tRNA ligase alpha subunit of Stenotrophomonas maltophilia (strain K279a).